A 521-amino-acid polypeptide reads, in one-letter code: GMC-type oxidoreductase acuG (521 aa).

Residues threonine 14–valine 15, glutamate 34–alanine 35, leucine 82, asparagine 90–leucine 93, alanine 492, and tyrosine 503–glutamine 504 contribute to the FAD site.

Belongs to the GMC oxidoreductase family. FAD is required as a cofactor.

Its pathway is secondary metabolite biosynthesis. Its function is as follows. GMC-type oxidoreductase; part of the gene cluster that mediates the biosynthesis of aculins. The pathway begins with the synthesis of 6-methylsalicylic acid by the polyketide synthase (PKS) acuA via condensation of acetate and malonate units. The 6-methylsalicylic acid decarboxylase acuB then catalyzes the decarboxylation of 6-methylsalicylic acid to yield m-cresol (also known as 3-methylphenol). These first reactions occur in the cytosol. The intermediate m-cresol is then transported into the endoplasmic reticulum where the cytochrome P450 monooxygenase acuC converts it to m-hydroxybenzyl alcohol, which is further converted to gentisyl alcohol by the cytochrome P450 monooxygenase acuD. Gentisyl alcohol is further oxidized by the oxidoreductase acuE that probably catalyzes hydroxylation of the aromatic ring. The aromatic system might then be opened by oxidation through a Baeyer-Villiger type of oxidation, which could be catalyzed by acuF, with the carboxylic acid at C-1 subsequently reduced to an aldehyde by acuG. Subsequently, a hemiacetal is formed, before the dehydrogenase acuH would reduce the double bond between C-4 and C-6. Finally, keto-enol tautomerism results in formation of aculinic acid, which exists as two diastereomers (both R/S configurations at C-1) by non-enzymatic hemiacetal formation. The carboxypeptidase acuI could be involved in the linking of aculinic acid to an aculene A moiety produced by the aculene biosynthesis cluster and which leads to the production of aculin A. AcuI may also be involved in the attachment of proline to aculinic acid to form epi-aculins A and B. This is GMC-type oxidoreductase acuG from Aspergillus aculeatus (strain ATCC 16872 / CBS 172.66 / WB 5094).